We begin with the raw amino-acid sequence, 267 residues long: Rhomboid-type serine protease 2 (267 aa).

6 helical membrane passes run leucine 20 to glutamine 40, phenylalanine 67 to leucine 87, threonine 99 to isoleucine 119, alanine 126 to isoleucine 146, phenylalanine 155 to isoleucine 179, and leucine 185 to alanine 206. Residue serine 134 is the Nucleophile of the active site. Histidine 187 is a catalytic residue. The interval arginine 247–proline 267 is disordered.

It belongs to the peptidase S54 family.

The protein localises to the golgi apparatus membrane. It is found in the golgi apparatus. The protein resides in the cis-Golgi network membrane. The catalysed reaction is Cleaves type-1 transmembrane domains using a catalytic dyad composed of serine and histidine that are contributed by different transmembrane domains.. Probable rhomboid-type serine protease that catalyzes intramembrane proteolysis. This is Rhomboid-type serine protease 2 (RBD2) from Gibberella zeae (strain ATCC MYA-4620 / CBS 123657 / FGSC 9075 / NRRL 31084 / PH-1) (Wheat head blight fungus).